Consider the following 431-residue polypeptide: Serine hydroxymethyltransferase (431 aa).

(6S)-5,6,7,8-tetrahydrofolate-binding positions include Leu-127 and 131–133 (GHL). Lys-236 bears the N6-(pyridoxal phosphate)lysine mark.

Belongs to the SHMT family. In terms of assembly, homodimer. Requires pyridoxal 5'-phosphate as cofactor.

The protein resides in the cytoplasm. The enzyme catalyses (6R)-5,10-methylene-5,6,7,8-tetrahydrofolate + glycine + H2O = (6S)-5,6,7,8-tetrahydrofolate + L-serine. It functions in the pathway one-carbon metabolism; tetrahydrofolate interconversion. It participates in amino-acid biosynthesis; glycine biosynthesis; glycine from L-serine: step 1/1. Its function is as follows. Catalyzes the reversible interconversion of serine and glycine with tetrahydrofolate (THF) serving as the one-carbon carrier. This reaction serves as the major source of one-carbon groups required for the biosynthesis of purines, thymidylate, methionine, and other important biomolecules. Also exhibits THF-independent aldolase activity toward beta-hydroxyamino acids, producing glycine and aldehydes, via a retro-aldol mechanism. The protein is Serine hydroxymethyltransferase of Granulibacter bethesdensis (strain ATCC BAA-1260 / CGDNIH1).